The primary structure comprises 84 residues: Putative membrane protein insertion efficiency factor (84 aa).

This sequence belongs to the UPF0161 family.

The protein localises to the cell inner membrane. Could be involved in insertion of integral membrane proteins into the membrane. This chain is Putative membrane protein insertion efficiency factor, found in Shewanella oneidensis (strain ATCC 700550 / JCM 31522 / CIP 106686 / LMG 19005 / NCIMB 14063 / MR-1).